The sequence spans 317 residues: Putative 2-hydroxyacid dehydrogenase SAB2178 (317 aa).

Residues 155 to 156, 234 to 236, and aspartate 260 each bind NAD(+); these read EI and ASR. Arginine 236 is a catalytic residue. Residue glutamate 265 is part of the active site. Residue histidine 283 is the Proton donor of the active site. 283–286 contacts NAD(+); that stretch reads HIGN.

Belongs to the D-isomer specific 2-hydroxyacid dehydrogenase family.

The sequence is that of Putative 2-hydroxyacid dehydrogenase SAB2178 from Staphylococcus aureus (strain bovine RF122 / ET3-1).